Consider the following 1242-residue polypeptide: DNA-directed RNA polymerase RPB2 homolog (1242 aa).

The C4-type zinc finger occupies 1180 to 1201; sequence CRNCGEPAIYNASHPIYKCMNC.

It belongs to the RNA polymerase beta chain family. As to quaternary structure, part of the viral DNA-directed RNA polymerase that consists of 8 polII-like subunits (RPB1, RPB2, RPB3, RPB5, RPB6, RPB7, RPB9, RPB10), a capping enzyme and a termination factor.

Its subcellular location is the host cytoplasm. The protein resides in the virion. The enzyme catalyses RNA(n) + a ribonucleoside 5'-triphosphate = RNA(n+1) + diphosphate. Catalytic component of the DNA-directed RNA polymerase (RNAP) that catalyzes the transcription in the cytoplasm of viral DNA into RNA using the four ribonucleoside triphosphates as substrates. Forms the polymerase active center together with RPB1. Part of the core element with the central large cleft, the clamp element that moves to open and close the cleft and the jaws that are thought to grab the incoming DNA template. This chain is DNA-directed RNA polymerase RPB2 homolog, found in African swine fever virus (isolate Tick/Malawi/Lil 20-1/1983) (ASFV).